Consider the following 332-residue polypeptide: Glycerol-3-phosphate dehydrogenase [NAD(P)+] (332 aa).

Positions 13, 34, and 108 each coordinate NADPH. 3 residues coordinate sn-glycerol 3-phosphate: Lys-108, Gly-136, and Ser-138. NADPH is bound at residue Ala-140. Positions 191, 244, 254, 255, and 256 each coordinate sn-glycerol 3-phosphate. Lys-191 functions as the Proton acceptor in the catalytic mechanism. An NADPH-binding site is contributed by Arg-255. Positions 279 and 281 each coordinate NADPH.

This sequence belongs to the NAD-dependent glycerol-3-phosphate dehydrogenase family.

The protein localises to the cytoplasm. The catalysed reaction is sn-glycerol 3-phosphate + NAD(+) = dihydroxyacetone phosphate + NADH + H(+). The enzyme catalyses sn-glycerol 3-phosphate + NADP(+) = dihydroxyacetone phosphate + NADPH + H(+). Its pathway is membrane lipid metabolism; glycerophospholipid metabolism. Its function is as follows. Catalyzes the reduction of the glycolytic intermediate dihydroxyacetone phosphate (DHAP) to sn-glycerol 3-phosphate (G3P), the key precursor for phospholipid synthesis. The protein is Glycerol-3-phosphate dehydrogenase [NAD(P)+] of Francisella tularensis subsp. novicida (strain U112).